Here is a 402-residue protein sequence, read N- to C-terminus: BTB and MATH domain-containing protein 40 (402 aa).

The segment at 1–25 (MSDRHLYGSDHSYLSSKPSCSSCRR) is disordered. A compositionally biased stretch (low complexity) spans 15–25 (SSKPSCSSCRR). Residues 43-177 (VLTQRWTVCN…DKSLVISCHI (135 aa)) enclose the MATH domain. The BTB domain maps to 222 to 295 (TDMTIVAGPL…IYAGVIKSDI (74 aa)).

Interacts with cul-3.

It participates in protein modification; protein ubiquitination. Its function is as follows. Probable substrate-specific adapter of an E3 ubiquitin-protein ligase complex which mediates the ubiquitination and subsequent proteasomal degradation of target proteins. The chain is BTB and MATH domain-containing protein 40 (bath-40) from Caenorhabditis elegans.